A 284-amino-acid chain; its full sequence is 4-diphosphocytidyl-2-C-methyl-D-erythritol kinase (284 aa).

K14 is a catalytic residue. Residue 98–108 coordinates ATP; sequence PMGGGIGGGSS. The active site involves D140.

Belongs to the GHMP kinase family. IspE subfamily.

It catalyses the reaction 4-CDP-2-C-methyl-D-erythritol + ATP = 4-CDP-2-C-methyl-D-erythritol 2-phosphate + ADP + H(+). It functions in the pathway isoprenoid biosynthesis; isopentenyl diphosphate biosynthesis via DXP pathway; isopentenyl diphosphate from 1-deoxy-D-xylulose 5-phosphate: step 3/6. Its function is as follows. Catalyzes the phosphorylation of the position 2 hydroxy group of 4-diphosphocytidyl-2C-methyl-D-erythritol. This chain is 4-diphosphocytidyl-2-C-methyl-D-erythritol kinase, found in Shewanella loihica (strain ATCC BAA-1088 / PV-4).